The chain runs to 3373 residues: Intermembrane lipid transfer protein vps13A (3373 aa).

Residues 3-119 (FEGLVSDVLS…QAELKKKKLE (117 aa)) enclose the Chorein N-terminal domain. 5 disordered regions span residues 818–858 (PKAT…VNSS), 1028–1096 (VPIN…KTAS), 1259–1304 (NNNK…DLEK), 1648–1729 (DPSI…EEEK), and 1872–1913 (QKKR…GKKD). Over residues 823-839 (TPINDSNSPSSVSPKLI) the composition is skewed to polar residues. Composition is skewed to low complexity over residues 840-858 (STSPHSFSSSSAPVDVNSS) and 1048-1066 (SSPNQQSPNQQSPNQQSPQ). Basic and acidic residues-rich tracts occupy residues 1263-1274 (SIEKSKSIDSKL) and 1288-1304 (RSDDNHEKSERELDLEK). 3 stretches are compositionally biased toward low complexity: residues 1659–1685 (QQQQQQSSSSSFIPSQQQQQQKVRSQS), 1695–1716 (SSIGGKESKTISSSISNNSLSS), and 1884–1898 (SSSTSLPSLNKSTNS). The segment covering 1899–1909 (FQTSTSGNSNS) has biased composition (polar residues). The SHR-BD domain occupies 2405–2706 (TLSFYCQYWL…CYGWDEPSAE (302 aa)). The disordered stretch occupies residues 2909 to 2933 (RGNNASNNNNNNGMTSSQMRQSGSG). Over residues 2911 to 2920 (NNASNNNNNN) the composition is skewed to low complexity.

It belongs to the VPS13 family.

It localises to the membrane. Mediates the transfer of lipids between membranes at organelle contact sites. This Dictyostelium discoideum (Social amoeba) protein is Intermembrane lipid transfer protein vps13A (vps13A).